A 111-amino-acid chain; its full sequence is Large ribosomal subunit protein uL22 (111 aa).

It belongs to the universal ribosomal protein uL22 family. As to quaternary structure, part of the 50S ribosomal subunit.

Functionally, this protein binds specifically to 23S rRNA; its binding is stimulated by other ribosomal proteins, e.g. L4, L17, and L20. It is important during the early stages of 50S assembly. It makes multiple contacts with different domains of the 23S rRNA in the assembled 50S subunit and ribosome. Its function is as follows. The globular domain of the protein is located near the polypeptide exit tunnel on the outside of the subunit, while an extended beta-hairpin is found that lines the wall of the exit tunnel in the center of the 70S ribosome. The polypeptide is Large ribosomal subunit protein uL22 (Xanthomonas oryzae pv. oryzae (strain PXO99A)).